The chain runs to 170 residues: RNA pyrophosphohydrolase (170 aa).

A Nudix hydrolase domain is found at 9–162 (PYRPCAGIMV…KRAVYEKVVA (154 aa)). The short motif at 50–71 (GGIDDGERPLTAAIRELYEETG) is the Nudix box element.

This sequence belongs to the Nudix hydrolase family. RppH subfamily. A divalent metal cation serves as cofactor.

In terms of biological role, accelerates the degradation of transcripts by removing pyrophosphate from the 5'-end of triphosphorylated RNA, leading to a more labile monophosphorylated state that can stimulate subsequent ribonuclease cleavage. The polypeptide is RNA pyrophosphohydrolase (Agrobacterium fabrum (strain C58 / ATCC 33970) (Agrobacterium tumefaciens (strain C58))).